The following is a 274-amino-acid chain: Large ribosomal subunit protein uL2 (274 aa).

The tract at residues 221-254 (RGTAMNPADHPHGGGEGRTFGKHPVSPWGLPTKG) is disordered.

This sequence belongs to the universal ribosomal protein uL2 family. In terms of assembly, part of the 50S ribosomal subunit. Forms a bridge to the 30S subunit in the 70S ribosome.

Its function is as follows. One of the primary rRNA binding proteins. Required for association of the 30S and 50S subunits to form the 70S ribosome, for tRNA binding and peptide bond formation. It has been suggested to have peptidyltransferase activity; this is somewhat controversial. Makes several contacts with the 16S rRNA in the 70S ribosome. In Sulfurihydrogenibium sp. (strain YO3AOP1), this protein is Large ribosomal subunit protein uL2.